The following is a 137-amino-acid chain: Large ribosomal subunit protein eL28 (137 aa).

Serine 2 carries the N-acetylserine modification. Residues lysine 58 and lysine 65 each participate in a glycyl lysine isopeptide (Lys-Gly) (interchain with G-Cter in SUMO2) cross-link. Serine 115 bears the Phosphoserine mark.

Belongs to the eukaryotic ribosomal protein eL28 family. In terms of assembly, component of the large ribosomal subunit.

The protein resides in the cytoplasm. In terms of biological role, component of the large ribosomal subunit. The ribosome is a large ribonucleoprotein complex responsible for the synthesis of proteins in the cell. The chain is Large ribosomal subunit protein eL28 (RPL28) from Homo sapiens (Human).